The sequence spans 250 residues: tRNA pseudouridine synthase A (250 aa).

Asp52 serves as the catalytic Nucleophile. Tyr111 is a binding site for substrate.

Belongs to the tRNA pseudouridine synthase TruA family. As to quaternary structure, homodimer.

The catalysed reaction is uridine(38/39/40) in tRNA = pseudouridine(38/39/40) in tRNA. Functionally, formation of pseudouridine at positions 38, 39 and 40 in the anticodon stem and loop of transfer RNAs. The chain is tRNA pseudouridine synthase A from Methylorubrum extorquens (strain PA1) (Methylobacterium extorquens).